Reading from the N-terminus, the 570-residue chain is Urease subunit alpha (570 aa).

Residues 131-570 (GGMDSHIHFI…LPMAQRYFLF (440 aa)) enclose the Urease domain. Positions 136, 138, and 219 each coordinate Ni(2+). At Lys-219 the chain carries N6-carboxylysine. His-221 serves as a coordination point for substrate. Positions 248 and 274 each coordinate Ni(2+). His-322 serves as the catalytic Proton donor. Asp-362 contacts Ni(2+).

The protein belongs to the metallo-dependent hydrolases superfamily. Urease alpha subunit family. In terms of assembly, heterotrimer of UreA (gamma), UreB (beta) and UreC (alpha) subunits. Three heterotrimers associate to form the active enzyme. Ni cation serves as cofactor. Post-translationally, carboxylation allows a single lysine to coordinate two nickel ions.

It is found in the cytoplasm. It carries out the reaction urea + 2 H2O + H(+) = hydrogencarbonate + 2 NH4(+). It functions in the pathway nitrogen metabolism; urea degradation; CO(2) and NH(3) from urea (urease route): step 1/1. This chain is Urease subunit alpha, found in Rhizobium etli (strain ATCC 51251 / DSM 11541 / JCM 21823 / NBRC 15573 / CFN 42).